We begin with the raw amino-acid sequence, 129 residues long: uncharacterized protein (129 aa).

2 consecutive C2H2-type zinc fingers follow at residues 75 to 99 (FVCPLCLMPFSSSVSLKQHIRYTEH) and 101 to 124 (KVCPVCKKEFTSTDSALDHVCKKH).

Essential for virus function. This is an uncharacterized protein from Saccharolobus solfataricus (Sulfolobus solfataricus).